The primary structure comprises 143 residues: Large ribosomal subunit protein eL28z (143 aa).

The protein belongs to the eukaryotic ribosomal protein eL28 family. In terms of assembly, component of the large ribosomal subunit. Expressed in seedlings, roots, stems, leaves, inflorescences and siliques.

It is found in the cytoplasm. The protein localises to the nucleus. The protein resides in the nucleolus. Its subcellular location is the nucleoplasm. Its function is as follows. Component of the large ribosomal subunit. Essential in leaf polarity establishment, probably having a role for translation in leaf dorsoventral patterning to specify leaf adaxial identity. The polypeptide is Large ribosomal subunit protein eL28z (Arabidopsis thaliana (Mouse-ear cress)).